Here is an 85-residue protein sequence, read N- to C-terminus: Small ribosomal subunit protein bS16 (85 aa).

The protein belongs to the bacterial ribosomal protein bS16 family.

The sequence is that of Small ribosomal subunit protein bS16 from Pseudomonas syringae pv. tomato (strain ATCC BAA-871 / DC3000).